A 265-amino-acid chain; its full sequence is Lipopolysaccharide core heptose(I) kinase WaaP (265 aa).

Residue D162 is part of the active site.

The protein belongs to the protein kinase superfamily. KdkA/RfaP family. The cofactor is Mg(2+).

The enzyme catalyses an L-alpha-D-Hep-(1-&gt;3)-L-alpha-D-Hep-(1-&gt;5)-[alpha-Kdo-(2-&gt;4)]-alpha-Kdo-(2-&gt;6)-lipid A + ATP = an L-alpha-D-Hep-(1-&gt;3)-4-O-phospho-L-alpha-D-Hep-(1-&gt;5)-[alpha-Kdo-(2-&gt;4)]-alpha-Kdo-(2-&gt;6)-lipid A + ADP + H(+). It carries out the reaction L-alpha-D-Hep-(1-&gt;3)-L-alpha-D-Hep-(1-&gt;5)-[alpha-Kdo-(2-&gt;4)]-alpha-Kdo-(2-&gt;6)-lipid A (E. coli) + ATP = L-alpha-D-Hep-(1-&gt;3)-4-O-phospho-L-alpha-D-Hep-(1-&gt;5)-[alpha-Kdo-(2-&gt;4)]-alpha-Kdo-(2-&gt;6)-lipid A (E. coli) + ADP + H(+). Its pathway is bacterial outer membrane biogenesis; LPS core biosynthesis. Its function is as follows. Kinase involved in the biosynthesis of the core oligosaccharide region of lipopolysaccharide (LPS). Catalyzes the phosphorylation of heptose I (HepI), the first heptose added to the Kdo2-lipid A module. The protein is Lipopolysaccharide core heptose(I) kinase WaaP of Escherichia coli (strain K12).